The chain runs to 161 residues: Vasotocin-neurophysin VT (161 aa).

The first 22 residues, 1-22 (MSAMGWTLLAAALLAISAQSNG), serve as a signal peptide directing secretion. Cys-23 and Cys-28 are disulfide-bonded. Gly-31 is subject to Glycine amide. 7 cysteine pairs are disulfide-bonded: Cys-43–Cys-91, Cys-46–Cys-58, Cys-52–Cys-81, Cys-59–Cys-71, Cys-99–Cys-111, Cys-105–Cys-123, and Cys-112–Cys-117.

The protein belongs to the vasopressin/oxytocin family.

Its subcellular location is the secreted. Functionally, vasotocin is an antidiuretic hormone. This Eptatretus stoutii (Pacific hagfish) protein is Vasotocin-neurophysin VT.